The chain runs to 124 residues: Small ribosomal subunit protein uS13 (124 aa).

The disordered stretch occupies residues 95-124 (GLPVRGQRTKTNARTRKGPKRTVAGKKKAR).

It belongs to the universal ribosomal protein uS13 family. Part of the 30S ribosomal subunit. Forms a loose heterodimer with protein S19. Forms two bridges to the 50S subunit in the 70S ribosome.

Located at the top of the head of the 30S subunit, it contacts several helices of the 16S rRNA. In the 70S ribosome it contacts the 23S rRNA (bridge B1a) and protein L5 of the 50S subunit (bridge B1b), connecting the 2 subunits; these bridges are implicated in subunit movement. Contacts the tRNAs in the A and P-sites. This chain is Small ribosomal subunit protein uS13, found in Leifsonia xyli subsp. xyli (strain CTCB07).